Consider the following 127-residue polypeptide: Membrane-bound lysozyme inhibitor of C-type lysozyme (127 aa).

The signal sequence occupies residues 1–18; that stretch reads MKKALWLLLAAVPVVLVA. C19 is lipidated: N-palmitoyl cysteine. C19 carries S-diacylglycerol cysteine lipidation. A disulfide bridge links C51 with C124.

It belongs to the MliC family. Type 2 subfamily. In terms of assembly, homodimer.

It is found in the cell outer membrane. Functionally, specifically inhibits C-type lysozymes. The protein is Membrane-bound lysozyme inhibitor of C-type lysozyme of Pseudomonas aeruginosa (strain ATCC 15692 / DSM 22644 / CIP 104116 / JCM 14847 / LMG 12228 / 1C / PRS 101 / PAO1).